Here is a 290-residue protein sequence, read N- to C-terminus: 4-hydroxy-3-methylbut-2-enyl diphosphate reductase (290 aa).

Cys13 is a binding site for [4Fe-4S] cluster. Residues His41 and His75 each contribute to the (2E)-4-hydroxy-3-methylbut-2-enyl diphosphate site. Dimethylallyl diphosphate contacts are provided by His41 and His75. Isopentenyl diphosphate is bound by residues His41 and His75. Cys97 is a binding site for [4Fe-4S] cluster. Residue His129 participates in (2E)-4-hydroxy-3-methylbut-2-enyl diphosphate binding. His129 contributes to the dimethylallyl diphosphate binding site. Isopentenyl diphosphate is bound at residue His129. The Proton donor role is filled by Glu131. Residue Thr167 coordinates (2E)-4-hydroxy-3-methylbut-2-enyl diphosphate. Residue Cys198 coordinates [4Fe-4S] cluster. (2E)-4-hydroxy-3-methylbut-2-enyl diphosphate-binding residues include Ser226, Ser227, Asn228, and Ser270. Dimethylallyl diphosphate is bound by residues Ser226, Ser227, Asn228, and Ser270. Positions 226, 227, 228, and 270 each coordinate isopentenyl diphosphate.

It belongs to the IspH family. [4Fe-4S] cluster is required as a cofactor.

It carries out the reaction isopentenyl diphosphate + 2 oxidized [2Fe-2S]-[ferredoxin] + H2O = (2E)-4-hydroxy-3-methylbut-2-enyl diphosphate + 2 reduced [2Fe-2S]-[ferredoxin] + 2 H(+). The catalysed reaction is dimethylallyl diphosphate + 2 oxidized [2Fe-2S]-[ferredoxin] + H2O = (2E)-4-hydroxy-3-methylbut-2-enyl diphosphate + 2 reduced [2Fe-2S]-[ferredoxin] + 2 H(+). It functions in the pathway isoprenoid biosynthesis; dimethylallyl diphosphate biosynthesis; dimethylallyl diphosphate from (2E)-4-hydroxy-3-methylbutenyl diphosphate: step 1/1. The protein operates within isoprenoid biosynthesis; isopentenyl diphosphate biosynthesis via DXP pathway; isopentenyl diphosphate from 1-deoxy-D-xylulose 5-phosphate: step 6/6. Functionally, catalyzes the conversion of 1-hydroxy-2-methyl-2-(E)-butenyl 4-diphosphate (HMBPP) into a mixture of isopentenyl diphosphate (IPP) and dimethylallyl diphosphate (DMAPP). Acts in the terminal step of the DOXP/MEP pathway for isoprenoid precursor biosynthesis. The protein is 4-hydroxy-3-methylbut-2-enyl diphosphate reductase of Parabacteroides distasonis (strain ATCC 8503 / DSM 20701 / CIP 104284 / JCM 5825 / NCTC 11152).